A 142-amino-acid chain; its full sequence is Large ribosomal subunit protein uL13 (142 aa).

It belongs to the universal ribosomal protein uL13 family. In terms of assembly, part of the 50S ribosomal subunit.

In terms of biological role, this protein is one of the early assembly proteins of the 50S ribosomal subunit, although it is not seen to bind rRNA by itself. It is important during the early stages of 50S assembly. The sequence is that of Large ribosomal subunit protein uL13 from Halorhodospira halophila (strain DSM 244 / SL1) (Ectothiorhodospira halophila (strain DSM 244 / SL1)).